The primary structure comprises 195 residues: Probable serine/threonine-protein kinase BUD32 homolog (195 aa).

Positions 1–195 (MKVYLGGEAE…GRYVERVSMG (195 aa)) constitute a Protein kinase domain. Lysine 12 contributes to the ATP binding site. Aspartate 107 (proton acceptor) is an active-site residue.

It belongs to the protein kinase superfamily. Tyr protein kinase family. BUD32 subfamily.

The protein localises to the cytoplasm. The enzyme catalyses L-seryl-[protein] + ATP = O-phospho-L-seryl-[protein] + ADP + H(+). It catalyses the reaction L-threonyl-[protein] + ATP = O-phospho-L-threonyl-[protein] + ADP + H(+). In terms of biological role, could be involved in the formation of a threonylcarbamoyl group on adenosine at position 37 (t(6)A37) in tRNAs that read codons beginning with adenine. This Archaeoglobus fulgidus (strain ATCC 49558 / DSM 4304 / JCM 9628 / NBRC 100126 / VC-16) protein is Probable serine/threonine-protein kinase BUD32 homolog.